Reading from the N-terminus, the 484-residue chain is Perphorin-2 (484 aa).

N-linked (GlcNAc...) asparagine glycosylation is found at asparagine 16, asparagine 240, asparagine 256, asparagine 265, asparagine 326, asparagine 330, asparagine 356, and asparagine 411.

Its subcellular location is the secreted. It is found in the extracellular space. The protein localises to the extracellular matrix. Functionally, may be involved in conversion of asexual males and females to the sexual pathway. The protein is Perphorin-2 of Volvox carteri (Green alga).